Reading from the N-terminus, the 488-residue chain is Cobyric acid synthase (488 aa).

Positions 252–442 (RTRICVPILP…VHGLFASDAF (191 aa)) constitute a GATase cobBQ-type domain. The Nucleophile role is filled by Cys334. His434 is an active-site residue.

This sequence belongs to the CobB/CobQ family. CobQ subfamily.

It functions in the pathway cofactor biosynthesis; adenosylcobalamin biosynthesis. Its function is as follows. Catalyzes amidations at positions B, D, E, and G on adenosylcobyrinic A,C-diamide. NH(2) groups are provided by glutamine, and one molecule of ATP is hydrogenolyzed for each amidation. This chain is Cobyric acid synthase, found in Xanthobacter autotrophicus (strain ATCC BAA-1158 / Py2).